The primary structure comprises 469 residues: Neuraminidase (469 aa).

Over M1 to K6 the chain is Intravirion. A helical transmembrane segment spans residues I7–L29. The tract at residues G11–V33 is involved in apical transport and lipid raft association. Residues V30–I469 lie on the Virion surface side of the membrane. A hypervariable stalk region region spans residues H36 to P90. 4 N-linked (GlcNAc...) asparagine; by host glycosylation sites follow: N61, N69, N70, and N86. Positions Q91–I469 are head of neuraminidase. 8 disulfide bridges follow: C92-C417, C124-C129, C183-C230, C232-C237, C278-C291, C280-C289, C318-C337, and C421-C447. R118 contacts substrate. N146 is a glycosylation site (N-linked (GlcNAc...) asparagine; by host). D151 (proton donor/acceptor) is an active-site residue. Substrate is bound at residue R152. N200 and N234 each carry an N-linked (GlcNAc...) asparagine; by host glycan. E276 to E277 serves as a coordination point for substrate. R292 is a substrate binding site. Residues D293, G297, and D324 each coordinate Ca(2+). Residues D324–K350 form a disordered region. Low complexity predominate over residues S333 to N342. R371 lines the substrate pocket. The N-linked (GlcNAc...) asparagine; by host glycan is linked to N402. The active-site Nucleophile is Y406.

It belongs to the glycosyl hydrolase 34 family. As to quaternary structure, homotetramer. Ca(2+) serves as cofactor. Post-translationally, N-glycosylated.

The protein localises to the virion membrane. The protein resides in the host apical cell membrane. It carries out the reaction Hydrolysis of alpha-(2-&gt;3)-, alpha-(2-&gt;6)-, alpha-(2-&gt;8)- glycosidic linkages of terminal sialic acid residues in oligosaccharides, glycoproteins, glycolipids, colominic acid and synthetic substrates.. Its activity is regulated as follows. Inhibited by the neuraminidase inhibitors zanamivir (Relenza) and oseltamivir (Tamiflu). These drugs interfere with the release of progeny virus from infected cells and are effective against all influenza strains. Resistance to neuraminidase inhibitors is quite rare. In terms of biological role, catalyzes the removal of terminal sialic acid residues from viral and cellular glycoconjugates. Cleaves off the terminal sialic acids on the glycosylated HA during virus budding to facilitate virus release. Additionally helps virus spread through the circulation by further removing sialic acids from the cell surface. These cleavages prevent self-aggregation and ensure the efficient spread of the progeny virus from cell to cell. Otherwise, infection would be limited to one round of replication. Described as a receptor-destroying enzyme because it cleaves a terminal sialic acid from the cellular receptors. May facilitate viral invasion of the upper airways by cleaving the sialic acid moieties on the mucin of the airway epithelial cells. Likely to plays a role in the budding process through its association with lipid rafts during intracellular transport. May additionally display a raft-association independent effect on budding. Plays a role in the determination of host range restriction on replication and virulence. Sialidase activity in late endosome/lysosome traffic seems to enhance virus replication. The sequence is that of Neuraminidase from Influenza A virus (strain A/Northern Territory/60/1968 H3N2) (Influenza A virus (strain NT60)).